The chain runs to 892 residues: DNA mismatch repair protein MutS (892 aa).

607–614 (GPNMSGKS) is an ATP binding site. The tract at residues 833–854 (EESQLSFFGGEQSPKKQDKPVL) is disordered. Residues 845 to 854 (SPKKQDKPVL) show a composition bias toward basic and acidic residues.

The protein belongs to the DNA mismatch repair MutS family.

Its function is as follows. This protein is involved in the repair of mismatches in DNA. It is possible that it carries out the mismatch recognition step. This protein has a weak ATPase activity. This chain is DNA mismatch repair protein MutS, found in Bacillus cereus (strain Q1).